The chain runs to 418 residues: AP-3 complex subunit mu-1 (418 aa).

Positions 176 to 417 (NNEAYFDVVE…ITKAGKFQVR (242 aa)) constitute an MHD domain.

It belongs to the adaptor complexes medium subunit family. As to quaternary structure, adaptor protein complex 3 (AP-3) is a heterotetramer composed of two large adaptins (delta-type subunit AP3D1 and beta-type subunit AP3B1 or AP3B2), a medium adaptin (mu-type subunit AP3M1 or AP3M2) and a small adaptin (sigma-type subunit APS1 or AP3S2). Interacts with AGAP1. AP-3 associates with the BLOC-1 complex.

It is found in the golgi apparatus. It localises to the cytoplasmic vesicle membrane. Part of the AP-3 complex, an adaptor-related complex which is not clathrin-associated. The complex is associated with the Golgi region as well as more peripheral structures. It facilitates the budding of vesicles from the Golgi membrane and may be directly involved in trafficking to lysosomes. In concert with the BLOC-1 complex, AP-3 is required to target cargos into vesicles assembled at cell bodies for delivery into neurites and nerve terminals. The sequence is that of AP-3 complex subunit mu-1 (Ap3m1) from Rattus norvegicus (Rat).